Reading from the N-terminus, the 116-residue chain is uncharacterized protein (116 aa).

2 consecutive transmembrane segments (helical) span residues 40-60 (AIVK…IGIL) and 72-92 (FLGS…VVPI).

It localises to the membrane. This is an uncharacterized protein from Saccharomyces cerevisiae (strain ATCC 204508 / S288c) (Baker's yeast).